The chain runs to 251 residues: Adenosylcobinamide-GDP ribazoletransferase (251 aa).

5 consecutive transmembrane segments (helical) span residues 44–64 (LVGLLAGLVCAGPFLLGLLAG), 114–134 (IGAFGVLGIVFGVLGQVVLAH), 143–163 (GALVWAPVLGRAACVVLAACV), 177–197 (AGATHMTVLFCAGVTAATGVA), and 198–218 (LAGPPAVLAAALPCACAVVWL).

The protein belongs to the CobS family. Requires Mg(2+) as cofactor.

The protein localises to the cell inner membrane. It catalyses the reaction alpha-ribazole + adenosylcob(III)inamide-GDP = adenosylcob(III)alamin + GMP + H(+). The catalysed reaction is alpha-ribazole 5'-phosphate + adenosylcob(III)inamide-GDP = adenosylcob(III)alamin 5'-phosphate + GMP + H(+). It participates in cofactor biosynthesis; adenosylcobalamin biosynthesis; adenosylcobalamin from cob(II)yrinate a,c-diamide: step 7/7. In terms of biological role, joins adenosylcobinamide-GDP and alpha-ribazole to generate adenosylcobalamin (Ado-cobalamin). Also synthesizes adenosylcobalamin 5'-phosphate from adenosylcobinamide-GDP and alpha-ribazole 5'-phosphate. The sequence is that of Adenosylcobinamide-GDP ribazoletransferase from Nitratidesulfovibrio vulgaris (strain DSM 19637 / Miyazaki F) (Desulfovibrio vulgaris).